The following is a 290-amino-acid chain: Sodium/potassium-transporting ATPase subunit beta-2 (290 aa).

The Cytoplasmic portion of the chain corresponds to 1 to 39 (MVIQKEKKSCGQVVEEWKEFVWNPRTHQFMGRTGTSWAF). The helical; Signal-anchor for type II membrane protein transmembrane segment at 40–67 (ILLFYLVFYGFLTAMFTLTMWVMLQTVS) threads the bilayer. Residues 68-290 (DHTPKYQDRL…VAFKLRINKA (223 aa)) are Extracellular-facing. N-linked (GlcNAc...) asparagine glycosylation is found at Asn96 and Asn118. Cysteines 129 and 150 form a disulfide. N-linked (GlcNAc...) asparagine glycosylation is found at Asn153 and Asn159. Cysteines 160 and 177 form a disulfide. Asn193, Asn197, and Asn238 each carry an N-linked (GlcNAc...) asparagine glycan. The immunoglobulin-like stretch occupies residues 193–290 (NQSMNVTCVG…VAFKLRINKA (98 aa)). Cys200 and Cys261 form a disulfide bridge.

This sequence belongs to the X(+)/potassium ATPases subunit beta family. The sodium/potassium-transporting ATPase is composed of a catalytic alpha subunit, an auxiliary non-catalytic beta subunit and an additional regulatory subunit. Interacts with isoform 2 of BSG. Highly expressed in brain (at protein level).

Its subcellular location is the cell membrane. This is the non-catalytic component of the active enzyme, which catalyzes the hydrolysis of ATP coupled with the exchange of Na(+) and K(+) ions across the plasma membrane. The exact function of the beta-2 subunit is not known. In terms of biological role, mediates cell adhesion of neurons and astrocytes, and promotes neurite outgrowth. In Rattus norvegicus (Rat), this protein is Sodium/potassium-transporting ATPase subunit beta-2 (Atp1b2).